The following is a 202-amino-acid chain: Outer-membrane lipoprotein carrier protein (202 aa).

The first 18 residues, 1–18 (MNKLFLILLLIFSHEVFS), serve as a signal peptide directing secretion.

The protein belongs to the LolA family. As to quaternary structure, monomer.

The protein localises to the periplasm. In terms of biological role, participates in the translocation of lipoproteins from the inner membrane to the outer membrane. Only forms a complex with a lipoprotein if the residue after the N-terminal Cys is not an aspartate (The Asp acts as a targeting signal to indicate that the lipoprotein should stay in the inner membrane). The sequence is that of Outer-membrane lipoprotein carrier protein from Legionella pneumophila (strain Corby).